We begin with the raw amino-acid sequence, 132 residues long: Large-conductance mechanosensitive channel (132 aa).

Transmembrane regions (helical) follow at residues 14 to 34 (VVDL…VSSL), 38 to 58 (IITP…LHFG), and 67 to 87 (GNFI…FMFV).

Belongs to the MscL family. In terms of assembly, homopentamer.

The protein resides in the cell membrane. Its function is as follows. Channel that opens in response to stretch forces in the membrane lipid bilayer. May participate in the regulation of osmotic pressure changes within the cell. This is Large-conductance mechanosensitive channel from Bacillus cereus (strain ATCC 10987 / NRS 248).